A 196-amino-acid polypeptide reads, in one-letter code: Ribosome maturation factor RimP (196 aa).

The tract at residues E176–Q196 is disordered. Over residues T177 to Q196 the composition is skewed to acidic residues.

This sequence belongs to the RimP family.

It localises to the cytoplasm. Required for maturation of 30S ribosomal subunits. This is Ribosome maturation factor RimP from Roseobacter denitrificans (strain ATCC 33942 / OCh 114) (Erythrobacter sp. (strain OCh 114)).